The sequence spans 101 residues: Capsid assembly scaffolding protein (101 aa).

Residues 1–24 form a disordered region; sequence MPMERDSHEEILNKLNDPELEHSE. Residues 79-99 are a coiled coil; it reads EEIKQEELSETITIEDLEKQA.

It belongs to the phi29likevirus scaffolding protein family. Homodimer. Interacts non-specifically with DNA; probably binds DNA in the early stages of DNA packaging.

Its function is as follows. Scaffolding protein involved in the icosahedric procapsid assembly. Coassembles with the capsid proteins to form the procapsid. The scaffolding protein is found within the capsid as a serie of concentric shells. During DNA packaging, the scaffolding protein molecules are released from the procapsid. This is Capsid assembly scaffolding protein (7) from Bacillus subtilis (Bacteriophage B103).